The sequence spans 200 residues: UPF0329 protein ECU06_1670 (200 aa).

This sequence belongs to the UPF0329 family.

This Encephalitozoon cuniculi (strain GB-M1) (Microsporidian parasite) protein is UPF0329 protein ECU06_1670.